The following is a 184-amino-acid chain: Ribosome-recycling factor (184 aa).

Belongs to the RRF family.

The protein resides in the cytoplasm. In terms of biological role, responsible for the release of ribosomes from messenger RNA at the termination of protein biosynthesis. May increase the efficiency of translation by recycling ribosomes from one round of translation to another. The chain is Ribosome-recycling factor from Borreliella afzelii (strain PKo) (Borrelia afzelii).